A 482-amino-acid polypeptide reads, in one-letter code: Malvidin galactosylase UGT88C3 (482 aa).

His16 serves as the catalytic Proton acceptor. Asp117 acts as the Charge relay in catalysis. Residues Ser279, Trp345, Ala349, His366, Asn370, Ser371, and Glu374 each contribute to the UDP site.

It belongs to the UDP-glycosyltransferase family.

The protein localises to the endoplasmic reticulum. The protein resides in the nucleus. The enzyme catalyses malvidin + UDP-alpha-D-galactose = malvidin 3-O-beta-D-galactoside + UDP + H(+). It participates in pigment biosynthesis; anthocyanin biosynthesis. UDP-glycosyltransferase which uses UDP-galactose and malvidin as substrates to catalyze the biosynthesis of malvidin 3-O-galactoside, an anthocyanin conferring purple pigmentation. This Oryza sativa subsp. indica (Rice) protein is Malvidin galactosylase UGT88C3.